We begin with the raw amino-acid sequence, 257 residues long: NAD-capped RNA hydrolase NudC (257 aa).

Positions 25 and 69 each coordinate substrate. Positions 98 and 101 each coordinate Zn(2+). Glu-111 contributes to the substrate binding site. Residues Cys-116 and Cys-119 each coordinate Zn(2+). Tyr-124 contacts substrate. The region spanning Pro-125–Thr-248 is the Nudix hydrolase domain. The a divalent metal cation site is built by Ala-158, Glu-174, and Glu-178. The short motif at Gly-159–Gly-180 is the Nudix box element. Gln-192–Ser-199 contributes to the substrate binding site. A divalent metal cation is bound at residue Glu-219. Ala-241 contacts substrate.

Belongs to the Nudix hydrolase family. NudC subfamily. Homodimer. Mg(2+) serves as cofactor. It depends on Mn(2+) as a cofactor. Zn(2+) is required as a cofactor.

It catalyses the reaction a 5'-end NAD(+)-phospho-ribonucleoside in mRNA + H2O = a 5'-end phospho-adenosine-phospho-ribonucleoside in mRNA + beta-nicotinamide D-ribonucleotide + 2 H(+). The enzyme catalyses NAD(+) + H2O = beta-nicotinamide D-ribonucleotide + AMP + 2 H(+). The catalysed reaction is NADH + H2O = reduced beta-nicotinamide D-ribonucleotide + AMP + 2 H(+). MRNA decapping enzyme that specifically removes the nicotinamide adenine dinucleotide (NAD) cap from a subset of mRNAs by hydrolyzing the diphosphate linkage to produce nicotinamide mononucleotide (NMN) and 5' monophosphate mRNA. The NAD-cap is present at the 5'-end of some mRNAs and stabilizes RNA against 5'-processing. Has preference for mRNAs with a 5'-end purine. Catalyzes the hydrolysis of a broad range of dinucleotide pyrophosphates. The sequence is that of NAD-capped RNA hydrolase NudC from Shigella flexneri serotype 5b (strain 8401).